Consider the following 265-residue polypeptide: Putative pyruvate, phosphate dikinase regulatory protein 2 (265 aa).

150 to 157 (GVSRTSKT) contributes to the ADP binding site.

The protein belongs to the pyruvate, phosphate/water dikinase regulatory protein family. PDRP subfamily.

It catalyses the reaction N(tele)-phospho-L-histidyl/L-threonyl-[pyruvate, phosphate dikinase] + ADP = N(tele)-phospho-L-histidyl/O-phospho-L-threonyl-[pyruvate, phosphate dikinase] + AMP + H(+). It carries out the reaction N(tele)-phospho-L-histidyl/O-phospho-L-threonyl-[pyruvate, phosphate dikinase] + phosphate + H(+) = N(tele)-phospho-L-histidyl/L-threonyl-[pyruvate, phosphate dikinase] + diphosphate. In terms of biological role, bifunctional serine/threonine kinase and phosphorylase involved in the regulation of the pyruvate, phosphate dikinase (PPDK) by catalyzing its phosphorylation/dephosphorylation. This Latilactobacillus sakei subsp. sakei (strain 23K) (Lactobacillus sakei subsp. sakei) protein is Putative pyruvate, phosphate dikinase regulatory protein 2.